The chain runs to 247 residues: Zinc finger protein YPR015C (247 aa).

2 consecutive C2H2-type zinc fingers follow at residues 185–207 (KQCP…YLIH) and 213–237 (FKCT…LRTH).

The sequence is that of Zinc finger protein YPR015C from Saccharomyces cerevisiae (strain ATCC 204508 / S288c) (Baker's yeast).